Here is a 95-residue protein sequence, read N- to C-terminus: Large ribosomal subunit protein uL23 (95 aa).

It belongs to the universal ribosomal protein uL23 family. As to quaternary structure, part of the 50S ribosomal subunit. Contacts protein L29, and trigger factor when it is bound to the ribosome.

In terms of biological role, one of the early assembly proteins it binds 23S rRNA. One of the proteins that surrounds the polypeptide exit tunnel on the outside of the ribosome. Forms the main docking site for trigger factor binding to the ribosome. The polypeptide is Large ribosomal subunit protein uL23 (Rubrobacter xylanophilus (strain DSM 9941 / JCM 11954 / NBRC 16129 / PRD-1)).